The primary structure comprises 470 residues: ATP synthase subunit beta (470 aa).

151 to 158 (GGAGVGKT) is an ATP binding site.

It belongs to the ATPase alpha/beta chains family. As to quaternary structure, F-type ATPases have 2 components, CF(1) - the catalytic core - and CF(0) - the membrane proton channel. CF(1) has five subunits: alpha(3), beta(3), gamma(1), delta(1), epsilon(1). CF(0) has three main subunits: a(1), b(2) and c(9-12). The alpha and beta chains form an alternating ring which encloses part of the gamma chain. CF(1) is attached to CF(0) by a central stalk formed by the gamma and epsilon chains, while a peripheral stalk is formed by the delta and b chains.

The protein resides in the cell membrane. It catalyses the reaction ATP + H2O + 4 H(+)(in) = ADP + phosphate + 5 H(+)(out). Functionally, produces ATP from ADP in the presence of a proton gradient across the membrane. The catalytic sites are hosted primarily by the beta subunits. The sequence is that of ATP synthase subunit beta from Mycoplasma mobile (strain ATCC 43663 / 163K / NCTC 11711) (Mesomycoplasma mobile).